Reading from the N-terminus, the 283-residue chain is Acetylglutamate kinase (283 aa).

Substrate is bound by residues 63 to 64 (GG), Arg85, and Asn178.

Belongs to the acetylglutamate kinase family. ArgB subfamily.

The protein resides in the plastid. It is found in the chloroplast. It catalyses the reaction N-acetyl-L-glutamate + ATP = N-acetyl-L-glutamyl 5-phosphate + ADP. The protein operates within amino-acid biosynthesis; L-arginine biosynthesis; N(2)-acetyl-L-ornithine from L-glutamate: step 2/4. Functionally, catalyzes the ATP-dependent phosphorylation of N-acetyl-L-glutamate. This chain is Acetylglutamate kinase, found in Porphyra purpurea (Red seaweed).